A 552-amino-acid chain; its full sequence is Capsid protein precursor (552 aa).

The segment at 1–41 (MKQNDTKKTTQRRNSKKYSSKTNRGTKRAPRDQEVGTGAQE) is disordered. Basic residues predominate over residues 9–28 (TTQRRNSKKYSSKTNRGTKR).

In terms of assembly, homodimer. Post-translationally, the 7 kDa polypeptide is acetylated. Autocatalytic proteolysis releases a post-translationally modified peptide that remains associated with nucleic acid within the virion. This peptide is observed only when nucleic acid is packaged in the capsid.

It localises to the virion. Functionally, the capsid protein self-assembles to form an icosahedral capsid with a T=2 symmetry made of 120 subunits. The polypeptide is Capsid protein precursor (Segment-1) (Human picobirnavirus (strain Human/Thailand/Hy005102/-) (PBV)).